A 166-amino-acid chain; its full sequence is Minor capsid protein VP2 (166 aa).

A disordered region spans residues 138 to 166 (PAPSGFVNPNYQPSPPRLKLGPRPPSTNV). A compositionally biased stretch (pro residues) spans 149–166 (QPSPPRLKLGPRPPSTNV).

Belongs to the vesivirus VP2 protein family. As to quaternary structure, homooligomer. The portal-like structure consists in 12 copies of VP2. Interacts with capsid protein VP1.

It is found in the virion. The protein resides in the host cytoplasm. Minor structural protein that forms a portal-like structure at a unique three-fold axis of symmetry, following binding to the host receptor. The channel formed by VP2 may allow the delivery of the viral genome through the host endosomal membrane. The chain is Minor capsid protein VP2 from Homo sapiens (Human).